The following is a 505-amino-acid chain: Protein disulfide-isomerase A3 (505 aa).

An N-terminal signal peptide occupies residues 1–24; the sequence is MRLRRLALFPGVALLLAAARLAAA. Positions 25–133 constitute a Thioredoxin 1 domain; sequence SDVLELTDDN…IVSHLKKQAG (109 aa). Active-site nucleophile residues include Cys-57 and Cys-60. Cys-57 and Cys-60 are oxidised to a cystine. Lys-61 is modified (N6-methyllysine). A disulfide bond links Cys-85 and Cys-92. Position 129 is an N6-succinyllysine (Lys-129). Lys-152 is modified (N6-acetyllysine). Lys-218 carries the N6-succinyllysine modification. An N6-acetyllysine modification is found at Lys-252. The residue at position 319 (Thr-319) is a Phosphothreonine. Positions 343–485 constitute a Thioredoxin 2 domain; that stretch reads SRDGKALERF…FISYLQREAT (143 aa). Lys-362 is modified (N6-acetyllysine). Active-site nucleophile residues include Cys-406 and Cys-409. A disulfide bond links Cys-406 and Cys-409. The segment at 484–505 is disordered; it reads ATNPPVIQEEKPKKKKKAQEDL. Positions 491 to 505 are enriched in basic and acidic residues; it reads QEEKPKKKKKAQEDL. The residue at position 494 (Lys-494) is an N6-acetyllysine. A Prevents secretion from ER motif is present at residues 502-505; it reads QEDL.

Belongs to the protein disulfide isomerase family. As to quaternary structure, part of the major histocompatibility complex class I (MHC I) peptide loading complex composed of TAP1, TAP2, B2M, MHC heavy chain, TAPBP, PDIA3, and CALR. Interacts with ERP27 and CANX. Interacts with SERPINA2 and with SERPINA1. Interacts with ATP2A2. Post-translationally, within the major histocompatibility complex class I (MHC I) peptide loading complex forms reversible disulfide-linked heterodimers with TAPBP as part of its protein folding chaperone activity. This is essential to assist the dynamic assembly of the MHC I complex with high affinity antigens in the endoplasmic reticulum. In terms of processing, phosphorylated.

It is found in the endoplasmic reticulum. The protein localises to the endoplasmic reticulum lumen. Its subcellular location is the melanosome. It carries out the reaction Catalyzes the rearrangement of -S-S- bonds in proteins.. In terms of biological role, protein disulfide isomerase that catalyzes the formation, isomerization, and reduction or oxidation of disulfide bonds in client proteins and functions as a protein folding chaperone. Core component of the major histocompatibility complex class I (MHC I) peptide loading complex where it functions as an essential folding chaperone for TAPBP. Through TAPBP, assists the dynamic assembly of the MHC I complex with high affinity antigens in the endoplasmic reticulum. Therefore, plays a crucial role in the presentation of antigens to cytotoxic T cells in adaptive immunity. The protein is Protein disulfide-isomerase A3 (PDIA3) of Chlorocebus aethiops (Green monkey).